Here is a 170-residue protein sequence, read N- to C-terminus: Cathelicidin antimicrobial peptide (170 aa).

The first 30 residues, 1–30 (MKTQRDGHSLGRWSLVLLLLGLVMPLAIVA), serve as a signal peptide directing secretion. A propeptide spans 31-131 (QVLSYKEAVL…DISCDKDNKR (101 aa)) (cathelin-like domain (CLD)). Disulfide bonds link Cys-86–Cys-97 and Cys-108–Cys-125. The interval 150-162 (FKRIVQRIKDFLR) is active core.

This sequence belongs to the cathelicidin family. As to quaternary structure, monomer, homodimer or homotrimer (in vitro). Oligomerizes as tetra- or hexamer in solution (in vitro). In terms of processing, proteolytically cleaved by proteinase PRTN3 into antibacterial peptide LL-37. Proteolytically cleaved by cathepsin CTSG and neutrophil elastase ELANE. Post-translationally, resistant to proteolytic degradation in solution, and when bound to both zwitterionic (mimicking mammalian membranes) and negatively charged membranes (mimicking bacterial membranes). After secretion onto the skin surface, the CAMP gene product is processed by a serine protease-dependent mechanism into multiple novel antimicrobial peptides distinct from and shorter than cathelicidin LL-37. These peptides show enhanced antimicrobial action, acquiring the ability to kill skin pathogens such as S.aureus, E.coli and C.albicans. These peptides have lost the ability to stimulate CXCL8/IL8 release from keratinocytes. The peptides act synergistically, killing bacteria at lower concentrations when present together, and maintain activity at increased salt condition.

It is found in the secreted. The protein resides in the vesicle. Its function is as follows. Antimicrobial protein that is an integral component of the innate immune system. Binds to bacterial lipopolysaccharides (LPS). Acts via neutrophil N-formyl peptide receptors to enhance the release of CXCL2. Postsecretory processing generates multiple cathelicidin antimicrobial peptides with various lengths which act as a topical antimicrobial defense in sweat on skin. The unprocessed precursor form, cathelicidin antimicrobial peptide, inhibits the growth of Gram-negative E.coli and E.aerogenes with efficiencies comparable to that of the mature peptide LL-37 (in vitro). Antimicrobial peptide that is an integral component of the innate immune system. Binds to bacterial lipopolysaccharides (LPS). Causes membrane permeabilization by forming transmembrane pores (in vitro). Causes lysis of E.coli. Exhibits antimicrobial activity against Gram-negative bacteria such as P.aeruginosa, S.typhimurium, E.aerogenes, E.coli and P.syringae, Gram-positive bacteria such as L.monocytogenes, S.epidermidis, S.pyogenes and S.aureus, as well as vancomycin-resistant enterococci (in vitro). Exhibits antimicrobial activity against methicillin-resistant S.aureus, P.mirabilis, and C.albicans in low-salt media, but not in media containing 100 mM NaCl (in vitro). Forms chiral supramolecular assemblies with quinolone signal (PQS) molecules of P.aeruginosa, which may lead to interference of bacterial quorum signaling and perturbance of bacterial biofilm formation. May form supramolecular fiber-like assemblies on bacterial membranes. Induces cytokine and chemokine producation as well as TNF/TNFA and CSF2/GMCSF production in normal human keratinocytes. Exhibits hemolytic activity against red blood cells. In terms of biological role, exhibits antimicrobial activity against E.coli and B.megaterium (in vitro). This Pan troglodytes (Chimpanzee) protein is Cathelicidin antimicrobial peptide.